The following is a 248-amino-acid chain: Probable transcriptional regulatory protein Pfl01_4410 (248 aa).

It belongs to the TACO1 family.

The protein localises to the cytoplasm. This chain is Probable transcriptional regulatory protein Pfl01_4410, found in Pseudomonas fluorescens (strain Pf0-1).